The chain runs to 379 residues: Chaperone protein DnaJ (379 aa).

In terms of domain architecture, J spans D5 to G69. A CR-type zinc finger spans residues G136 to T218. Zn(2+) contacts are provided by C149, C152, C166, C169, C192, C195, C206, and C209. CXXCXGXG motif repeat units lie at residues C149 to G156, C166 to G173, C192 to G199, and C206 to G213.

Belongs to the DnaJ family. As to quaternary structure, homodimer. Zn(2+) is required as a cofactor.

It is found in the cytoplasm. Functionally, participates actively in the response to hyperosmotic and heat shock by preventing the aggregation of stress-denatured proteins and by disaggregating proteins, also in an autonomous, DnaK-independent fashion. Unfolded proteins bind initially to DnaJ; upon interaction with the DnaJ-bound protein, DnaK hydrolyzes its bound ATP, resulting in the formation of a stable complex. GrpE releases ADP from DnaK; ATP binding to DnaK triggers the release of the substrate protein, thus completing the reaction cycle. Several rounds of ATP-dependent interactions between DnaJ, DnaK and GrpE are required for fully efficient folding. Also involved, together with DnaK and GrpE, in the DNA replication of plasmids through activation of initiation proteins. The chain is Chaperone protein DnaJ from Staphylococcus aureus (strain USA300 / TCH1516).